Here is a 1002-residue protein sequence, read N- to C-terminus: Isoleucine--tRNA ligase (1002 aa).

The 'HIGH' region signature appears at 70-80 (PYANGNIHIGH). Glutamate 630 provides a ligand contact to L-isoleucyl-5'-AMP. Residues 671–675 (KMSKS) carry the 'KMSKS' region motif. An ATP-binding site is contributed by lysine 674.

This sequence belongs to the class-I aminoacyl-tRNA synthetase family. IleS type 1 subfamily. As to quaternary structure, monomer.

The protein localises to the cytoplasm. The catalysed reaction is tRNA(Ile) + L-isoleucine + ATP = L-isoleucyl-tRNA(Ile) + AMP + diphosphate. Catalyzes the attachment of isoleucine to tRNA(Ile). As IleRS can inadvertently accommodate and process structurally similar amino acids such as valine, to avoid such errors it has two additional distinct tRNA(Ile)-dependent editing activities. One activity is designated as 'pretransfer' editing and involves the hydrolysis of activated Val-AMP. The other activity is designated 'posttransfer' editing and involves deacylation of mischarged Val-tRNA(Ile). This chain is Isoleucine--tRNA ligase, found in Bradyrhizobium diazoefficiens (strain JCM 10833 / BCRC 13528 / IAM 13628 / NBRC 14792 / USDA 110).